The following is a 317-amino-acid chain: Acetyl-coenzyme A carboxylase carboxyl transferase subunit alpha (317 aa).

Residues 40 to 293 (LEVRVREAIV…GDVIANALGE (254 aa)) form the CoA carboxyltransferase C-terminal domain.

The protein belongs to the AccA family. Acetyl-CoA carboxylase is a heterohexamer composed of biotin carboxyl carrier protein (AccB), biotin carboxylase (AccC) and two subunits each of ACCase subunit alpha (AccA) and ACCase subunit beta (AccD).

It localises to the cytoplasm. It carries out the reaction N(6)-carboxybiotinyl-L-lysyl-[protein] + acetyl-CoA = N(6)-biotinyl-L-lysyl-[protein] + malonyl-CoA. The protein operates within lipid metabolism; malonyl-CoA biosynthesis; malonyl-CoA from acetyl-CoA: step 1/1. Functionally, component of the acetyl coenzyme A carboxylase (ACC) complex. First, biotin carboxylase catalyzes the carboxylation of biotin on its carrier protein (BCCP) and then the CO(2) group is transferred by the carboxyltransferase to acetyl-CoA to form malonyl-CoA. The sequence is that of Acetyl-coenzyme A carboxylase carboxyl transferase subunit alpha from Rhizobium etli (strain ATCC 51251 / DSM 11541 / JCM 21823 / NBRC 15573 / CFN 42).